The following is a 252-amino-acid chain: MDKLQNIRGVAFDLDGTLVDSAPGLAAAVDMALYALELPVAGEERVITWIGNGADVLMERALTWAREERATLRKTMGKPPVDEDIPAEEQVRILRKLFDRYYGEVAEEGTFLFPHVADTLGALNASGLSLGLVTNKPTPFVAPLLESLDIAKYFSVVIGGDDVQNKKPHPEPLLLVASRLGMMPEQMLFVGDSRNDIQAAKAAGCPSVGLTYGYNYGEAIALSEPDVIYDSFNDLLPALGLPHSDNQEIKND.

Asp-13 functions as the Nucleophile in the catalytic mechanism. Residues Asp-13, Asp-15, and Asp-192 each contribute to the Mg(2+) site.

It belongs to the HAD-like hydrolase superfamily. CbbY/CbbZ/Gph/YieH family. In terms of assembly, monomer. Mg(2+) is required as a cofactor. Requires chloride as cofactor.

The catalysed reaction is 2-phosphoglycolate + H2O = glycolate + phosphate. Its pathway is organic acid metabolism; glycolate biosynthesis; glycolate from 2-phosphoglycolate: step 1/1. In terms of biological role, specifically catalyzes the dephosphorylation of 2-phosphoglycolate. Is involved in the dissimilation of the intracellular 2-phosphoglycolate formed during the DNA repair of 3'-phosphoglycolate ends, a major class of DNA lesions induced by oxidative stress. This is Phosphoglycolate phosphatase from Salmonella choleraesuis (strain SC-B67).